The following is a 386-amino-acid chain: tRNA-specific 2-thiouridylase MnmA (386 aa).

Residues 9-16 (GMSGGVDS) and Met35 each bind ATP. The interval 95–97 (NPD) is interaction with target base in tRNA. Cys100 acts as the Nucleophile in catalysis. The cysteines at positions 100 and 196 are disulfide-linked. Gly124 is an ATP binding site. Positions 146–148 (KDQ) are interaction with tRNA. The active-site Cysteine persulfide intermediate is Cys196. Residues 308–309 (RY) are interaction with tRNA.

The protein belongs to the MnmA/TRMU family.

The protein localises to the cytoplasm. It carries out the reaction S-sulfanyl-L-cysteinyl-[protein] + uridine(34) in tRNA + AH2 + ATP = 2-thiouridine(34) in tRNA + L-cysteinyl-[protein] + A + AMP + diphosphate + H(+). Functionally, catalyzes the 2-thiolation of uridine at the wobble position (U34) of tRNA, leading to the formation of s(2)U34. This is tRNA-specific 2-thiouridylase MnmA from Burkholderia thailandensis (strain ATCC 700388 / DSM 13276 / CCUG 48851 / CIP 106301 / E264).